The following is a 656-amino-acid chain: MGSVWGLAVPLLVFCWKVGVSVSSPGLDISRSVPLVTTNNMEVSTFTQRDRPSSERAFQTTNLIQYVPLDTQTLSTESASNALSATSISSEVNSRDTQTTSFVTKTRKTHTTTPAASSLEAQTTSPNLSTLNIQITSPIASSLDAQTIFPVSLSLSTQTTSPAPSFLDTQTTSPEPSSLTTSPAPSSLITSPTPSSLTTSPAPSFLDTQTTSPAPSSLTTSPAPSSLDTQTISPIELTLKTQTISTVTETRTVSIRIPSDLTVMHTIPTETLAPSNSPRTGMSTVQTGTVWDSIEAVFDTLCTDDSSEEARKITVDLLTLAHTSTEVEYLSSESSSSSDSSAGVLSSSRVLGPDSATPAKGLVAFNITHIKLSNCITEIETTITISGAPGASLSPTEATAALFTSEILTLPPPTEAKPIFPETTSLSGILSTAGTPALATTLEGTVSTSAITESETAVAQTLTSVGTSVTVRRNPLENTSTLSIETQSHTEVLGTITVPMVAGSTMGEAASFVSFTALDSSSLSVVVTTESSATSETLTTGNTTNSSFLTESHPPFSIYSTTASTSKNPNITLTKTTASPKPPTHPTTSASTAWIRKTTKHDPGEDGGFLLVRLTVASPKDLTEHNAREKLMNQLRRELHARMPLVHMSFLSIRRG.

The first 21 residues, Met-1–Ser-21, serve as a signal peptide directing secretion. Composition is skewed to polar residues over residues Ala-85 to Asp-96, Pro-114 to Ser-125, and Thr-159 to Gln-170. Disordered stretches follow at residues Ala-85–Ser-125, Thr-159–Ile-232, and Tyr-329–Ser-348. Low complexity predominate over residues Thr-171–Leu-227. 5 repeat units span residues Thr-180 to Leu-188, Ile-189 to Leu-197, Thr-198 to Leu-206, Thr-210 to Leu-218, and Thr-219 to Leu-227. The segment at Thr-180–Leu-227 is approximate repeats. N-linked (GlcNAc...) asparagine glycans are attached at residues Asn-366 and Asn-570. The segment at Thr-399–Pro-603 is involved in oligomerization. Polar residues predominate over residues Ser-560 to Leu-573. The disordered stretch occupies residues Ser-560 to Thr-592. Residues Gly-604 to Gly-656 form an interaction with MET region.

As to quaternary structure, interacts with MET; oligomerization increases affinity for MET. Highly expressed in kidney. Up-regulated in renal tissues during renal injury.

The protein localises to the secreted. It localises to the apical cell membrane. Its subcellular location is the basolateral cell membrane. The protein resides in the cell projection. It is found in the microvillus membrane. May regulate MET signaling cascade. Seems to decrease hepatocyte growth factor (HGF)-induced transient MAPK activation. Blocks GRB2 recruitment to MET thus suppressing the GRB2-RAS pathway. Inhibits HGF-induced proliferation of MMP1 and MMP9 expression. The chain is Mucin-20 (Muc20) from Mus musculus (Mouse).